A 128-amino-acid chain; its full sequence is Putative histidinol dehydrogenase (128 aa).

The interval 21-84 (QRPDIAPRHH…EGQEKASGRR (64 aa)) is disordered. 2 stretches are compositionally biased toward basic and acidic residues: residues 34 to 50 (HRAEREAVEADRSRRTA) and 72 to 81 (QGREGQEKAS).

Belongs to the histidinol dehydrogenase family.

The enzyme catalyses L-histidinol + 2 NAD(+) + H2O = L-histidine + 2 NADH + 3 H(+). The protein operates within amino-acid biosynthesis; L-histidine biosynthesis; L-histidine from 5-phospho-alpha-D-ribose 1-diphosphate: step 9/9. In terms of biological role, catalyzes the sequential NAD-dependent oxidations of L-histidinol to L-histidinaldehyde and then to L-histidine. The chain is Putative histidinol dehydrogenase (hisD) from Azospirillum brasilense.